Here is a 317-residue protein sequence, read N- to C-terminus: Acetyl-coenzyme A carboxylase carboxyl transferase subunit alpha (317 aa).

The CoA carboxyltransferase C-terminal domain occupies 40-293 (LEVRVREAIV…GDVIANALGE (254 aa)).

It belongs to the AccA family. As to quaternary structure, acetyl-CoA carboxylase is a heterohexamer composed of biotin carboxyl carrier protein (AccB), biotin carboxylase (AccC) and two subunits each of ACCase subunit alpha (AccA) and ACCase subunit beta (AccD).

The protein resides in the cytoplasm. The enzyme catalyses N(6)-carboxybiotinyl-L-lysyl-[protein] + acetyl-CoA = N(6)-biotinyl-L-lysyl-[protein] + malonyl-CoA. The protein operates within lipid metabolism; malonyl-CoA biosynthesis; malonyl-CoA from acetyl-CoA: step 1/1. Its function is as follows. Component of the acetyl coenzyme A carboxylase (ACC) complex. First, biotin carboxylase catalyzes the carboxylation of biotin on its carrier protein (BCCP) and then the CO(2) group is transferred by the carboxyltransferase to acetyl-CoA to form malonyl-CoA. The chain is Acetyl-coenzyme A carboxylase carboxyl transferase subunit alpha from Rhizobium etli (strain ATCC 51251 / DSM 11541 / JCM 21823 / NBRC 15573 / CFN 42).